A 456-amino-acid chain; its full sequence is Bifunctional protein GlmU (456 aa).

Residues 1–229 (MLNSAMSVVI…LSEVEGVNNR (229 aa)) are pyrophosphorylase. UDP-N-acetyl-alpha-D-glucosamine-binding positions include 11–14 (LAAG), Lys25, Gln76, 81–82 (GT), 103–105 (YGD), Gly140, Glu154, Asn169, and Asn227. Asp105 provides a ligand contact to Mg(2+). Position 227 (Asn227) interacts with Mg(2+). Residues 230–250 (LQLSRLERVYQSEQAEKLLLA) form a linker region. The tract at residues 251–456 (GVMLRDPARF…QGWQRPAKKK (206 aa)) is N-acetyltransferase. UDP-N-acetyl-alpha-D-glucosamine contacts are provided by Arg333 and Lys351. His363 serves as the catalytic Proton acceptor. 2 residues coordinate UDP-N-acetyl-alpha-D-glucosamine: Tyr366 and Asn377. Residues Ala380, 386-387 (NY), Ser405, Ala423, and Arg440 each bind acetyl-CoA.

This sequence in the N-terminal section; belongs to the N-acetylglucosamine-1-phosphate uridyltransferase family. The protein in the C-terminal section; belongs to the transferase hexapeptide repeat family. Homotrimer. It depends on Mg(2+) as a cofactor.

The protein resides in the cytoplasm. It carries out the reaction alpha-D-glucosamine 1-phosphate + acetyl-CoA = N-acetyl-alpha-D-glucosamine 1-phosphate + CoA + H(+). The enzyme catalyses N-acetyl-alpha-D-glucosamine 1-phosphate + UTP + H(+) = UDP-N-acetyl-alpha-D-glucosamine + diphosphate. It functions in the pathway nucleotide-sugar biosynthesis; UDP-N-acetyl-alpha-D-glucosamine biosynthesis; N-acetyl-alpha-D-glucosamine 1-phosphate from alpha-D-glucosamine 6-phosphate (route II): step 2/2. Its pathway is nucleotide-sugar biosynthesis; UDP-N-acetyl-alpha-D-glucosamine biosynthesis; UDP-N-acetyl-alpha-D-glucosamine from N-acetyl-alpha-D-glucosamine 1-phosphate: step 1/1. It participates in bacterial outer membrane biogenesis; LPS lipid A biosynthesis. Its function is as follows. Catalyzes the last two sequential reactions in the de novo biosynthetic pathway for UDP-N-acetylglucosamine (UDP-GlcNAc). The C-terminal domain catalyzes the transfer of acetyl group from acetyl coenzyme A to glucosamine-1-phosphate (GlcN-1-P) to produce N-acetylglucosamine-1-phosphate (GlcNAc-1-P), which is converted into UDP-GlcNAc by the transfer of uridine 5-monophosphate (from uridine 5-triphosphate), a reaction catalyzed by the N-terminal domain. The sequence is that of Bifunctional protein GlmU from Citrobacter koseri (strain ATCC BAA-895 / CDC 4225-83 / SGSC4696).